A 43-amino-acid chain; its full sequence is Protein PsbN (43 aa).

Residues T5–F27 form a helical membrane-spanning segment.

Belongs to the PsbN family.

The protein resides in the plastid. It is found in the chloroplast thylakoid membrane. Its function is as follows. May play a role in photosystem I and II biogenesis. This Mesostigma viride (Green alga) protein is Protein PsbN.